A 443-amino-acid chain; its full sequence is Putative transporter AmpG 1 (443 aa).

12 helical membrane-spanning segments follow: residues 6-26 (HVCI…MITG), 43-63 (IGIL…APVF), 74-96 (ILGH…TSIL), 106-128 (VLLS…ILSA), 144-164 (GIYI…AIYL), 172-192 (KIYQ…ILVS), 255-275 (DISL…YRLP), 300-320 (VCKF…GIIM), 326-346 (LYSI…FILL), 355-375 (ILFI…TAYI), 394-414 (LSSM…YMVV), and 416-436 (FGWQ…LLIL).

The protein belongs to the major facilitator superfamily.

Its subcellular location is the cell inner membrane. The chain is Putative transporter AmpG 1 (ampG1) from Rickettsia typhi (strain ATCC VR-144 / Wilmington).